A 939-amino-acid chain; its full sequence is Phosphoenolpyruvate carboxylase (939 aa).

Catalysis depends on residues H151 and K593.

Belongs to the PEPCase type 1 family. Requires Mg(2+) as cofactor.

The enzyme catalyses oxaloacetate + phosphate = phosphoenolpyruvate + hydrogencarbonate. In terms of biological role, forms oxaloacetate, a four-carbon dicarboxylic acid source for the tricarboxylic acid cycle. The chain is Phosphoenolpyruvate carboxylase from Gloeobacter violaceus (strain ATCC 29082 / PCC 7421).